Consider the following 130-residue polypeptide: Small ribosomal subunit protein uS9 (130 aa).

This sequence belongs to the universal ribosomal protein uS9 family.

The protein is Small ribosomal subunit protein uS9 of Sodalis glossinidius (strain morsitans).